Here is a 476-residue protein sequence, read N- to C-terminus: Aspartyl/glutamyl-tRNA(Asn/Gln) amidotransferase subunit B (476 aa).

This sequence belongs to the GatB/GatE family. GatB subfamily. As to quaternary structure, heterotrimer of A, B and C subunits.

It carries out the reaction L-glutamyl-tRNA(Gln) + L-glutamine + ATP + H2O = L-glutaminyl-tRNA(Gln) + L-glutamate + ADP + phosphate + H(+). The enzyme catalyses L-aspartyl-tRNA(Asn) + L-glutamine + ATP + H2O = L-asparaginyl-tRNA(Asn) + L-glutamate + ADP + phosphate + 2 H(+). Allows the formation of correctly charged Asn-tRNA(Asn) or Gln-tRNA(Gln) through the transamidation of misacylated Asp-tRNA(Asn) or Glu-tRNA(Gln) in organisms which lack either or both of asparaginyl-tRNA or glutaminyl-tRNA synthetases. The reaction takes place in the presence of glutamine and ATP through an activated phospho-Asp-tRNA(Asn) or phospho-Glu-tRNA(Gln). In Neisseria gonorrhoeae (strain ATCC 700825 / FA 1090), this protein is Aspartyl/glutamyl-tRNA(Asn/Gln) amidotransferase subunit B.